The following is a 639-amino-acid chain: Kininogen-1 (639 aa).

Positions 1-18 are cleaved as a signal peptide; sequence MKLITILLLCSRLLPSLA. In terms of domain architecture, Cystatin kininogen-type 1 spans 28-132; sequence CNDESLFQAV…TQICNITPGK (105 aa). Cystine bridges form between C28-C609, C83-C94, C107-C126, C142-C145, C206-C218, C229-C248, C264-C267, C328-C340, and C351-C370. N-linked (GlcNAc...) asparagine glycosylation occurs at N82. The region spanning 151 to 254 is the Cystatin kininogen-type 2 domain; that stretch reads VDSPELGPVL…SDSCEFYPGD (104 aa). 2 N-linked (GlcNAc...) asparagine glycosylation sites follow: N169 and N205. Residues 273–376 form the Cystatin kininogen-type 3 domain; it reads VDSPELKEAL…TVKCKVLDMT (104 aa). N294 carries N-linked (GlcNAc...) asparagine glycosylation. S332 is subject to Phosphoserine. Disordered stretches follow at residues 438-462 and 476-547; these read NHQG…GHGH and GYDH…LNPP. Basic residues predominate over residues 482-502; sequence PVGHGHGQRHGHGHGHGHGRD. Residues 503–519 show a composition bias toward basic and acidic residues; sequence KHTNKDKNNVKHTDQRR. Polar residues predominate over residues 522–537; the sequence is LTSSSEDNTTSTQIQG. N-linked (GlcNAc...) asparagine glycosylation is present at N529.

In terms of processing, bradykinin is released from kininogen by plasma kallikrein. Phosphorylated by FAM20C in the extracellular medium. Post-translationally, bradykinin is inactivated by ACE, which removes the dipeptide Arg-Phe from its C-terminus. In terms of tissue distribution, plasma.

The protein localises to the secreted. It localises to the extracellular space. Functionally, kininogens are inhibitors of thiol proteases. HMW-kininogen plays an important role in blood coagulation by helping to position optimally prekallikrein and factor XI next to factor XII; HMW-kininogen inhibits the thrombin- and plasmin-induced aggregation of thrombocytes. LMW-kininogen inhibits the aggregation of thrombocytes. LMW-kininogen is in contrast to HMW-kininogen not involved in blood clotting. In terms of biological role, the active peptide bradykinin is a potent vasodilatator that is released from HMW-kininogen shows a variety of physiological effects: (A) influence in smooth muscle contraction, (B) induction of hypotension, (C) natriuresis and diuresis, (D) decrease in blood glucose level, (E) it is a mediator of inflammation and causes (E1) increase in vascular permeability, (E2) stimulation of nociceptors (4E3) release of other mediators of inflammation (e.g. prostaglandins), (F) it has a cardioprotective effect (directly via bradykinin action, indirectly via endothelium-derived relaxing factor action). This is Kininogen-1 (Kng1) from Rattus norvegicus (Rat).